The primary structure comprises 831 residues: MKFTRREFMKAQAAASAAAVAGIALPATASNLIASQDLTKIKWEKAPCRFCGTGCSVLVGTQHGRVVATQGDPESPVNKGLNCVKGYFLSKIMYGKDRLTTPLLRMTEGVYDKNGQFEPVSWDAAFDIMADKFKDALKKKGPTAVGMFGSGQWTLWEGYAASKLMKAGFRTNNLDPNARHCMASAVGGFMRTFGIDEPMGCYDDLENADVFVLWGSNMAEMHPILWSRLADRRLSNPDVSVHVLSTYTHRSFELADNGMIFTPQSDLAILNFIANYIIQNDAVDKDFIEKHTNFRKGVTDIGYGLRPTDPLQKAAENPDSGASSPITFEEFAEYVSEFDVDYAVKMSGVPAEKLIELAKVYADPAKKVVSYWTMGFNQHTRGVWANNLMYNVHLLTGKISKPGSGPFSLTGQPSACGTAREVGTFSHRLPADLVVANPKHRAIAEKLWKLPEGTIEPKPGYHAVLQNRMLKDSKLNAYWVMCNNNVQAGANINEEIIPGYRNPENFIVVSDPYPTVTAQMGDLILPTAMWVEKEGAYGNAERRTQFWHQQVKAPEGAKSDLWQLVEFSKRFKIEEVWTEDLIAKMPEVRGETLFDVLYKNGQVDAFGLDEVADERLNDEARDFGFYIQKGLFEEYASFGRGHGHDLAPFDQYHEARGLRWPVVNGKETLWRFREGYDPYVEKGSEVQFYGHPDKKAVIFALPYEPPAESPDQEYDLWLSTGRVLEHWHSGSMTRRVPELYKAFPDAVVFMHPDDATARGVRRGDEIVLASRRGELTSRVETRGRNRPPRGLVFMPWFDAKQLVNKITLDATDPLSKQTDYKKCAVKITKKV.

Positions 1–29 (MKFTRREFMKAQAAASAAAVAGIALPATA) form a signal peptide, tat-type signal. In terms of domain architecture, 4Fe-4S Mo/W bis-MGD-type spans 41 to 97 (IKWEKAPCRFCGTGCSVLVGTQHGRVVATQGDPESPVNKGLNCVKGYFLSKIMYGKD). 4 residues coordinate [4Fe-4S] cluster: C48, C51, C55, and C83. Residues K85, Q152, N177, C181, 214–221 (WGSNMAEM), 245–249 (STYTH), 264–266 (QSD), M374, Q378, N484, 510–511 (SD), K533, D560, and 720–729 (TGRVLEHWHS) contribute to the Mo-bis(molybdopterin guanine dinucleotide) site. Residue W796 participates in substrate binding. Mo-bis(molybdopterin guanine dinucleotide) contacts are provided by N804 and K821.

It belongs to the prokaryotic molybdopterin-containing oxidoreductase family. NasA/NapA/NarB subfamily. As to quaternary structure, component of the periplasmic nitrate reductase NapAB complex composed of NapA and NapB. Requires [4Fe-4S] cluster as cofactor. It depends on Mo-bis(molybdopterin guanine dinucleotide) as a cofactor. Predicted to be exported by the Tat system. The position of the signal peptide cleavage has not been experimentally proven.

It is found in the periplasm. The enzyme catalyses 2 Fe(II)-[cytochrome] + nitrate + 2 H(+) = 2 Fe(III)-[cytochrome] + nitrite + H2O. Catalytic subunit of the periplasmic nitrate reductase complex NapAB. Receives electrons from NapB and catalyzes the reduction of nitrate to nitrite. The polypeptide is Periplasmic nitrate reductase (Psychromonas ingrahamii (strain DSM 17664 / CCUG 51855 / 37)).